We begin with the raw amino-acid sequence, 57 residues long: Small ribosomal subunit protein bS21 (57 aa).

Positions 35 to 57 are disordered; sequence RERYEKPSLRRKRKQEAARKRNR.

Belongs to the bacterial ribosomal protein bS21 family.

The chain is Small ribosomal subunit protein bS21 from Thermosynechococcus vestitus (strain NIES-2133 / IAM M-273 / BP-1).